Reading from the N-terminus, the 807-residue chain is Glycerol-3-phosphate acyltransferase (807 aa).

Positions 308–313 (CHRSHM) match the HXXXXD motif motif.

The protein belongs to the GPAT/DAPAT family.

It localises to the cell inner membrane. The enzyme catalyses sn-glycerol 3-phosphate + an acyl-CoA = a 1-acyl-sn-glycero-3-phosphate + CoA. The protein operates within phospholipid metabolism; CDP-diacylglycerol biosynthesis; CDP-diacylglycerol from sn-glycerol 3-phosphate: step 1/3. This Shewanella sp. (strain MR-4) protein is Glycerol-3-phosphate acyltransferase.